The chain runs to 77 residues: Sec-independent protein translocase protein TatA (77 aa).

The chain crosses the membrane as a helical span at residues 1-21; that stretch reads MGSFSIWHWLIVLVIVMLVFG. A disordered region spans residues 46–77; it reads GEGKAAADPAQSKELRDSTTIDVEAKEKTRQQ.

It belongs to the TatA/E family. The Tat system comprises two distinct complexes: a TatABC complex, containing multiple copies of TatA, TatB and TatC subunits, and a separate TatA complex, containing only TatA subunits. Substrates initially bind to the TatABC complex, which probably triggers association of the separate TatA complex to form the active translocon.

Its subcellular location is the cell inner membrane. Its function is as follows. Part of the twin-arginine translocation (Tat) system that transports large folded proteins containing a characteristic twin-arginine motif in their signal peptide across membranes. TatA could form the protein-conducting channel of the Tat system. The protein is Sec-independent protein translocase protein TatA of Cupriavidus necator (strain ATCC 17699 / DSM 428 / KCTC 22496 / NCIMB 10442 / H16 / Stanier 337) (Ralstonia eutropha).